Here is an 89-residue protein sequence, read N- to C-terminus: Transcriptional regulator WhiB2 (89 aa).

Residues 1–15 show a composition bias toward pro residues; that stretch reads MVPEAPAPFEEPLPP. The tract at residues 1–24 is disordered; that stretch reads MVPEAPAPFEEPLPPEATDQWQDR. Positions 26-83 constitute a 4Fe-4S Wbl-type domain; sequence LCAQTDPEAFFPEKGGSTREAKKICMGCEVRHECLEYALAHDERFGIWGGLSERERRR. Cys27 serves as a coordination point for [4Fe-4S] cluster. Ser42 bears the Phosphoserine mark. [4Fe-4S] cluster contacts are provided by Cys50, Cys53, and Cys59.

This sequence belongs to the WhiB family. [4Fe-4S] cluster serves as cofactor. May be phosphorylated, possibly on Ser-42. Post-translationally, the cluster is degraded quickly in the presence of air. Upon cluster removal intramolecular disulfide bonds are formed. In terms of processing, the Fe-S cluster can be nitrosylated by nitric oxide (NO).

The protein resides in the cytoplasm. Functionally, acts as a transcriptional regulator. Probably redox-responsive. The apo- but not holo-form probably binds DNA. The apo-form functions as a chaperone, preventing aggregation or helping in correct refolding of a number of substrates; this activity does not require ATP or the ability to bind a Fe-S cluster. Chaperone activity is insensitive to the redox state of its cysteine residues. The apo-form has no protein disulfide reductase activity. The apo-form binds to its own promoter. In Mycobacterium tuberculosis (strain ATCC 25618 / H37Rv), this protein is Transcriptional regulator WhiB2 (whiB2).